The chain runs to 237 residues: Large ribosomal subunit protein uL3 (237 aa).

Disordered regions lie at residues 133-155 (ASHG…DPGK) and 213-237 (PENA…EGAE). A compositionally biased stretch (polar residues) spans 135–150 (HGNSITHRSHGSTGQR). Residue glutamine 151 is modified to N5-methylglutamine. Residues 220–237 (AGLRAGAKAEAAATEGAE) are compositionally biased toward low complexity.

The protein belongs to the universal ribosomal protein uL3 family. In terms of assembly, part of the 50S ribosomal subunit. Forms a cluster with proteins L14 and L19. In terms of processing, methylated by PrmB.

In terms of biological role, one of the primary rRNA binding proteins, it binds directly near the 3'-end of the 23S rRNA, where it nucleates assembly of the 50S subunit. In Brucella canis (strain ATCC 23365 / NCTC 10854 / RM-666), this protein is Large ribosomal subunit protein uL3.